Here is a 61-residue protein sequence, read N- to C-terminus: UPF0434 protein Pmen_1615 (61 aa).

This sequence belongs to the UPF0434 family.

In Ectopseudomonas mendocina (strain ymp) (Pseudomonas mendocina), this protein is UPF0434 protein Pmen_1615.